Consider the following 176-residue polypeptide: ATP-dependent protease subunit HslV (176 aa).

The active site involves Thr5. 3 residues coordinate Na(+): Ser161, Cys164, and Thr167.

This sequence belongs to the peptidase T1B family. HslV subfamily. As to quaternary structure, a double ring-shaped homohexamer of HslV is capped on each side by a ring-shaped HslU homohexamer. The assembly of the HslU/HslV complex is dependent on binding of ATP.

It is found in the cytoplasm. The catalysed reaction is ATP-dependent cleavage of peptide bonds with broad specificity.. With respect to regulation, allosterically activated by HslU binding. In terms of biological role, protease subunit of a proteasome-like degradation complex believed to be a general protein degrading machinery. This Thermoanaerobacter pseudethanolicus (strain ATCC 33223 / 39E) (Clostridium thermohydrosulfuricum) protein is ATP-dependent protease subunit HslV.